The following is a 417-amino-acid chain: Histidine--tRNA ligase (417 aa).

It belongs to the class-II aminoacyl-tRNA synthetase family. In terms of assembly, homodimer.

The protein localises to the cytoplasm. It carries out the reaction tRNA(His) + L-histidine + ATP = L-histidyl-tRNA(His) + AMP + diphosphate + H(+). The protein is Histidine--tRNA ligase of Nitratidesulfovibrio vulgaris (strain DP4) (Desulfovibrio vulgaris).